We begin with the raw amino-acid sequence, 218 residues long: Elongation factor Ts (218 aa).

The tract at residues 82–85 is involved in Mg(2+) ion dislocation from EF-Tu; that stretch reads TDFV.

This sequence belongs to the EF-Ts family.

The protein localises to the cytoplasm. Its function is as follows. Associates with the EF-Tu.GDP complex and induces the exchange of GDP to GTP. It remains bound to the aminoacyl-tRNA.EF-Tu.GTP complex up to the GTP hydrolysis stage on the ribosome. The protein is Elongation factor Ts (tsf) of Synechocystis sp. (strain ATCC 27184 / PCC 6803 / Kazusa).